The sequence spans 325 residues: Structure-specific endonuclease subunit SLX1 (325 aa).

The GIY-YIG domain occupies 10 to 92; that stretch reads ALYTVYILRS…NNPHLSMHIP (83 aa). Residues 230–284 form an SLX1-type zinc finger; that stretch reads CVVCREEMKSGEGLHAVCTHEGCDGVGHISCWSRSFLKNNDTGSILPVQGQCPMC.

This sequence belongs to the SLX1 family. In terms of assembly, forms a heterodimer with SLX4. The cofactor is a divalent metal cation.

Its subcellular location is the nucleus. Catalytic subunit of the SLX1-SLX4 structure-specific endonuclease that resolves DNA secondary structures generated during DNA repair and recombination. Has endonuclease activity towards branched DNA substrates, introducing single-strand cuts in duplex DNA close to junctions with ss-DNA. In Chaetomium globosum (strain ATCC 6205 / CBS 148.51 / DSM 1962 / NBRC 6347 / NRRL 1970) (Soil fungus), this protein is Structure-specific endonuclease subunit SLX1.